A 430-amino-acid polypeptide reads, in one-letter code: Serine--tRNA ligase (430 aa).

Residue 237 to 239 participates in L-serine binding; sequence TAE. Position 268–270 (268–270) interacts with ATP; that stretch reads RSE. An L-serine-binding site is contributed by glutamate 291. Residue 355–358 coordinates ATP; sequence EISS. Serine 391 provides a ligand contact to L-serine.

Belongs to the class-II aminoacyl-tRNA synthetase family. Type-1 seryl-tRNA synthetase subfamily. In terms of assembly, homodimer. The tRNA molecule binds across the dimer.

It localises to the cytoplasm. The catalysed reaction is tRNA(Ser) + L-serine + ATP = L-seryl-tRNA(Ser) + AMP + diphosphate + H(+). It carries out the reaction tRNA(Sec) + L-serine + ATP = L-seryl-tRNA(Sec) + AMP + diphosphate + H(+). It functions in the pathway aminoacyl-tRNA biosynthesis; selenocysteinyl-tRNA(Sec) biosynthesis; L-seryl-tRNA(Sec) from L-serine and tRNA(Sec): step 1/1. In terms of biological role, catalyzes the attachment of serine to tRNA(Ser). Is also able to aminoacylate tRNA(Sec) with serine, to form the misacylated tRNA L-seryl-tRNA(Sec), which will be further converted into selenocysteinyl-tRNA(Sec). The polypeptide is Serine--tRNA ligase (Cronobacter sakazakii (strain ATCC BAA-894) (Enterobacter sakazakii)).